Consider the following 190-residue polypeptide: Protein shisa-like-2A (190 aa).

The next 2 helical transmembrane spans lie at 48-68 (SFFP…LIGL) and 70-90 (VAAV…YLFI).

The protein belongs to the shisa family.

The protein resides in the membrane. In Homo sapiens (Human), this protein is Protein shisa-like-2A.